Consider the following 577-residue polypeptide: DNA primase (577 aa).

The CHC2-type zinc finger occupies 40–64; it reads CPFHHDKTPSFTVSNEKQFYYCFGC. Positions 255-337 constitute a Toprim domain; it reads VYLLVVEGYI…KKTLKFILLP (83 aa). 3 residues coordinate Mg(2+): glutamate 261, aspartate 305, and aspartate 307.

Belongs to the DnaG primase family. In terms of assembly, monomer. Interacts with DnaB. The cofactor is Zn(2+). Requires Mg(2+) as cofactor.

The catalysed reaction is ssDNA + n NTP = ssDNA/pppN(pN)n-1 hybrid + (n-1) diphosphate.. Its function is as follows. RNA polymerase that catalyzes the synthesis of short RNA molecules used as primers for DNA polymerase during DNA replication. This Buchnera aphidicola subsp. Acyrthosiphon pisum (strain APS) (Acyrthosiphon pisum symbiotic bacterium) protein is DNA primase.